The following is a 148-amino-acid chain: 3-dehydroquinate dehydratase (148 aa).

Y23 acts as the Proton acceptor in catalysis. N75, H81, and D88 together coordinate substrate. The active-site Proton donor is H101. Substrate-binding positions include 102–103 and R112; that span reads LS.

Belongs to the type-II 3-dehydroquinase family. Homododecamer.

It catalyses the reaction 3-dehydroquinate = 3-dehydroshikimate + H2O. Its pathway is metabolic intermediate biosynthesis; chorismate biosynthesis; chorismate from D-erythrose 4-phosphate and phosphoenolpyruvate: step 3/7. Its function is as follows. Catalyzes a trans-dehydration via an enolate intermediate. This is 3-dehydroquinate dehydratase from Xanthomonas campestris pv. campestris (strain B100).